Here is a 225-residue protein sequence, read N- to C-terminus: uncharacterized protein (225 aa).

A run of 6 helical transmembrane segments spans residues 25-45 (MMLA…IPFL), 57-77 (VFLI…ITVA), 83-103 (FIWD…NFAI), 109-129 (LYFH…SLAT), 135-155 (LLTT…FGYV), and 187-207 (IFAL…LIGV).

The protein resides in the cell membrane. This is an uncharacterized protein from Mycoplasma pneumoniae (strain ATCC 29342 / M129 / Subtype 1) (Mycoplasmoides pneumoniae).